A 520-amino-acid chain; its full sequence is Ribonuclease Y (520 aa).

The helical transmembrane segment at 4-24 threads the bilayer; the sequence is TMFTIISILLSLICLVVGYFV. The KH domain occupies 210–273; that stretch reads TVSVVNLPND…ETARIALDKL (64 aa). An HD domain is found at 336-429; it reads VLKHSIEVAH…VAAADALSAA (94 aa).

Belongs to the RNase Y family.

It is found in the cell membrane. Functionally, endoribonuclease that initiates mRNA decay. This is Ribonuclease Y from Bacillus pumilus (strain SAFR-032).